The primary structure comprises 299 residues: Phosphoribosylaminoimidazole-succinocarboxamide synthase (299 aa).

The protein belongs to the SAICAR synthetase family.

It carries out the reaction 5-amino-1-(5-phospho-D-ribosyl)imidazole-4-carboxylate + L-aspartate + ATP = (2S)-2-[5-amino-1-(5-phospho-beta-D-ribosyl)imidazole-4-carboxamido]succinate + ADP + phosphate + 2 H(+). It participates in purine metabolism; IMP biosynthesis via de novo pathway; 5-amino-1-(5-phospho-D-ribosyl)imidazole-4-carboxamide from 5-amino-1-(5-phospho-D-ribosyl)imidazole-4-carboxylate: step 1/2. The chain is Phosphoribosylaminoimidazole-succinocarboxamide synthase from Maridesulfovibrio salexigens (strain ATCC 14822 / DSM 2638 / NCIMB 8403 / VKM B-1763) (Desulfovibrio salexigens).